Here is a 442-residue protein sequence, read N- to C-terminus: D-serine dehydratase (442 aa).

K118 is modified (N6-(pyridoxal phosphate)lysine).

The protein belongs to the serine/threonine dehydratase family. DsdA subfamily. In terms of assembly, monomer. Pyridoxal 5'-phosphate serves as cofactor.

It carries out the reaction D-serine = pyruvate + NH4(+). The polypeptide is D-serine dehydratase (Escherichia coli O6:H1 (strain CFT073 / ATCC 700928 / UPEC)).